A 245-amino-acid chain; its full sequence is 1-(5-phosphoribosyl)-5-[(5-phosphoribosylamino)methylideneamino] imidazole-4-carboxamide isomerase (245 aa).

The active-site Proton acceptor is the Asp-8. Residue Asp-130 is the Proton donor of the active site.

Belongs to the HisA/HisF family.

Its subcellular location is the cytoplasm. The enzyme catalyses 1-(5-phospho-beta-D-ribosyl)-5-[(5-phospho-beta-D-ribosylamino)methylideneamino]imidazole-4-carboxamide = 5-[(5-phospho-1-deoxy-D-ribulos-1-ylimino)methylamino]-1-(5-phospho-beta-D-ribosyl)imidazole-4-carboxamide. The protein operates within amino-acid biosynthesis; L-histidine biosynthesis; L-histidine from 5-phospho-alpha-D-ribose 1-diphosphate: step 4/9. The sequence is that of 1-(5-phosphoribosyl)-5-[(5-phosphoribosylamino)methylideneamino] imidazole-4-carboxamide isomerase from Pseudomonas fluorescens (strain ATCC BAA-477 / NRRL B-23932 / Pf-5).